A 381-amino-acid polypeptide reads, in one-letter code: Probable serine/threonine-protein kinase PBL25 (381 aa).

Cys3 carries S-palmitoyl cysteine lipidation. The segment at 16–41 (GSSMPAPYKQPNSPKRTTGEVVAKNA) is disordered. Thr54 carries the post-translational modification Phosphothreonine. The Protein kinase domain maps to 65–342 (FRQECLIGEG…SDVITALSFL (278 aa)). ATP contacts are provided by residues 71-79 (IGEGGFGRV) and Lys94. A Phosphotyrosine modification is found at Tyr139. Asp192 functions as the Proton acceptor in the catalytic mechanism. Residues Ser196 and Ser226 each carry the phosphoserine modification. Thr232 carries the post-translational modification Phosphothreonine. Tyr240 carries the post-translational modification Phosphotyrosine. A disordered region spans residues 347–381 (NSSNTGSNHLQQNRSNKYQDAVQWDSSPRYANSQM). The span at 355–381 (HLQQNRSNKYQDAVQWDSSPRYANSQM) shows a compositional bias: polar residues.

Belongs to the protein kinase superfamily. Ser/Thr protein kinase family.

It is found in the cell membrane. The enzyme catalyses L-seryl-[protein] + ATP = O-phospho-L-seryl-[protein] + ADP + H(+). The catalysed reaction is L-threonyl-[protein] + ATP = O-phospho-L-threonyl-[protein] + ADP + H(+). Its function is as follows. May be involved in plant defense signaling. This is Probable serine/threonine-protein kinase PBL25 from Arabidopsis thaliana (Mouse-ear cress).